A 94-amino-acid chain; its full sequence is CRISPR-associated endoribonuclease Cas2 (94 aa).

Asp-11 serves as a coordination point for Mg(2+).

This sequence belongs to the CRISPR-associated endoribonuclease Cas2 protein family. As to quaternary structure, homodimer, forms a heterotetramer with a Cas1 homodimer. Requires Mg(2+) as cofactor.

Functionally, CRISPR (clustered regularly interspaced short palindromic repeat), is an adaptive immune system that provides protection against mobile genetic elements (viruses, transposable elements and conjugative plasmids). CRISPR clusters contain sequences complementary to antecedent mobile elements and target invading nucleic acids. CRISPR clusters are transcribed and processed into CRISPR RNA (crRNA). Functions as a ssRNA-specific endoribonuclease. Involved in the integration of spacer DNA into the CRISPR cassette. The protein is CRISPR-associated endoribonuclease Cas2 of Allochromatium vinosum (strain ATCC 17899 / DSM 180 / NBRC 103801 / NCIMB 10441 / D) (Chromatium vinosum).